The following is a 316-amino-acid chain: 4-diphosphocytidyl-2-C-methyl-D-erythritol kinase (316 aa).

The active site involves K14. 96–106 contributes to the ATP binding site; the sequence is PMGAGLGGGSS. D138 is a catalytic residue.

The protein belongs to the GHMP kinase family. IspE subfamily.

The enzyme catalyses 4-CDP-2-C-methyl-D-erythritol + ATP = 4-CDP-2-C-methyl-D-erythritol 2-phosphate + ADP + H(+). It functions in the pathway isoprenoid biosynthesis; isopentenyl diphosphate biosynthesis via DXP pathway; isopentenyl diphosphate from 1-deoxy-D-xylulose 5-phosphate: step 3/6. In terms of biological role, catalyzes the phosphorylation of the position 2 hydroxy group of 4-diphosphocytidyl-2C-methyl-D-erythritol. The sequence is that of 4-diphosphocytidyl-2-C-methyl-D-erythritol kinase from Solibacter usitatus (strain Ellin6076).